The primary structure comprises 1389 residues: DNA-directed RNA polymerase subunit beta'' (1389 aa).

Cys-224, Cys-295, Cys-302, and Cys-305 together coordinate Zn(2+).

Belongs to the RNA polymerase beta' chain family. RpoC2 subfamily. As to quaternary structure, in plastids the minimal PEP RNA polymerase catalytic core is composed of four subunits: alpha, beta, beta', and beta''. When a (nuclear-encoded) sigma factor is associated with the core the holoenzyme is formed, which can initiate transcription. Zn(2+) is required as a cofactor.

It is found in the plastid. It localises to the chloroplast. It catalyses the reaction RNA(n) + a ribonucleoside 5'-triphosphate = RNA(n+1) + diphosphate. In terms of biological role, DNA-dependent RNA polymerase catalyzes the transcription of DNA into RNA using the four ribonucleoside triphosphates as substrates. This Morus indica (Mulberry) protein is DNA-directed RNA polymerase subunit beta''.